The sequence spans 250 residues: Pyrroloquinoline-quinone synthase (250 aa).

Belongs to the PqqC family.

It catalyses the reaction 6-(2-amino-2-carboxyethyl)-7,8-dioxo-1,2,3,4,7,8-hexahydroquinoline-2,4-dicarboxylate + 3 O2 = pyrroloquinoline quinone + 2 H2O2 + 2 H2O + H(+). It participates in cofactor biosynthesis; pyrroloquinoline quinone biosynthesis. Its function is as follows. Ring cyclization and eight-electron oxidation of 3a-(2-amino-2-carboxyethyl)-4,5-dioxo-4,5,6,7,8,9-hexahydroquinoline-7,9-dicarboxylic-acid to PQQ. This is Pyrroloquinoline-quinone synthase from Xanthomonas campestris pv. campestris (strain 8004).